The sequence spans 122 residues: Flagellar protein FliT (122 aa).

The interval 1–50 is required for homodimerization; that stretch reads MTSTVEFINRWQRIALLSQSLLELAQRGEWELLLQQEVSYLQSIETVMEK. The fliD binding stretch occupies residues 60-98; it reads IQDMVAGYIKQTLDNEQRLKGLLQQRLDELSGLIGQSTR.

The protein belongs to the FliT family. In terms of assembly, homodimer. Interacts with FliD and FlhC.

It is found in the cytoplasm. It localises to the cytosol. Functionally, dual-function protein that regulates the transcription of class 2 flagellar operons and that also acts as an export chaperone for the filament-capping protein FliD. As a transcriptional regulator, acts as an anti-FlhDC factor; it directly binds FlhC, thus inhibiting the binding of the FlhC/FlhD complex to class 2 promoters, resulting in decreased expression of class 2 flagellar operons. As a chaperone, effects FliD transition to the membrane by preventing its premature polymerization, and by directing it to the export apparatus. This chain is Flagellar protein FliT, found in Salmonella arizonae (strain ATCC BAA-731 / CDC346-86 / RSK2980).